A 507-amino-acid polypeptide reads, in one-letter code: ATP synthase subunit alpha, chloroplastic (507 aa).

An ATP-binding site is contributed by 170–177 (GDRQTGKT).

Belongs to the ATPase alpha/beta chains family. F-type ATPases have 2 components, CF(1) - the catalytic core - and CF(0) - the membrane proton channel. CF(1) has five subunits: alpha(3), beta(3), gamma(1), delta(1), epsilon(1). CF(0) has four main subunits: a, b, b' and c.

The protein resides in the plastid. Its subcellular location is the chloroplast thylakoid membrane. It catalyses the reaction ATP + H2O + 4 H(+)(in) = ADP + phosphate + 5 H(+)(out). Its function is as follows. Produces ATP from ADP in the presence of a proton gradient across the membrane. The alpha chain is a regulatory subunit. The chain is ATP synthase subunit alpha, chloroplastic from Acorus calamus var. americanus (American sweet flag).